The following is a 484-amino-acid chain: Fumigaclavine B O-acetyltransferase ifgI (484 aa).

The protein belongs to the fumigaclavine B O-acetyltransferase family. As to quaternary structure, monomer.

It catalyses the reaction fumigaclavine B + acetyl-CoA = fumigaclavine A + CoA. Its pathway is alkaloid biosynthesis; ergot alkaloid biosynthesis. Fumigaclavine B O-acetyltransferase; part of the gene cluster that mediates the biosynthesis of isofumigaclavines, fungal ergot alkaloids. The tryptophan dimethylallyltransferase ifgA catalyzes the first step of ergot alkaloid biosynthesis by condensing dimethylallyl diphosphate (DMAP) and tryptophan to form 4-dimethylallyl-L-tryptophan. The second step is catalyzed by the methyltransferase ifgB that methylates 4-dimethylallyl-L-tryptophan in the presence of S-adenosyl-L-methionine, resulting in the formation of N-methyl-dimethylallyl-L-tryptophan. The catalase ifgD and the FAD-dependent oxidoreductase ifgC then transform N-methyl-dimethylallyl-L-tryptophan to chanoclavine-I which is further oxidized by ifgE in the presence of NAD(+), resulting in the formation of chanoclavine-I aldehyde. The chanoclavine-I aldehyde reductases ifgG and/or fgaOx3 reduce chanoclavine-I aldehyde to dihydrochanoclavine-I aldehyde that spontaneously dehydrates to form 6,8-dimethyl-6,7-didehydroergoline. The festuclavine dehydrogenases ifgF1 and/or ifgF2 then catalyze the reduction of 6,8-dimethyl-6,7-didehydroergoline to form festuclavine. Hydrolysis of festuclavine by a yet undetermined cytochrome P450 monooxygenase (called ifgH) then leads to the formation of isofumigaclavine B which is in turn acetylated by ifgI to isofumigaclavine A. Penicillium roqueforti has interestingly at least two sets of genes for the consumption of chanoclavine-I aldehyde on three different loci, the OYEs ifgG/fgaOx3 and the festuclavine synthase homologs ifgF1/ifgF2. The reason for the duplication of these genes is unclear, probably to ensure the conversion of chanoclavine-I aldehyde by differential gene expression under various environmental conditions. The protein is Fumigaclavine B O-acetyltransferase ifgI of Penicillium roqueforti (strain FM164).